The chain runs to 715 residues: uncharacterized protein (715 aa).

A helical transmembrane segment spans residues 688–708; it reads VWKFNPALYSTITNIFLLIIF.

The protein belongs to the plectrovirus ORF1 family.

Its subcellular location is the host membrane. This is an uncharacterized protein from Spiroplasma virus SpV1-R8A2 B (SpV1).